Reading from the N-terminus, the 815-residue chain is 1,4-alpha-glucan branching enzyme GlgB (815 aa).

The active-site Nucleophile is Asp-405. Residue Glu-458 is the Proton donor of the active site.

It belongs to the glycosyl hydrolase 13 family. GlgB subfamily. As to quaternary structure, monomer.

The enzyme catalyses Transfers a segment of a (1-&gt;4)-alpha-D-glucan chain to a primary hydroxy group in a similar glucan chain.. It participates in glycan biosynthesis; glycogen biosynthesis. Catalyzes the formation of the alpha-1,6-glucosidic linkages in glycogen by scission of a 1,4-alpha-linked oligosaccharide from growing alpha-1,4-glucan chains and the subsequent attachment of the oligosaccharide to the alpha-1,6 position. In Histophilus somni (strain 2336) (Haemophilus somnus), this protein is 1,4-alpha-glucan branching enzyme GlgB.